A 481-amino-acid polypeptide reads, in one-letter code: Tryptophan 5-hydroxylase (481 aa).

Residues 56–131 enclose the ACT domain; sequence SVIFSLKNEI…NVISMSPPEN (76 aa). Residues Tyr-272, Arg-294, and Thr-302 each coordinate L-tryptophan. Residues His-309, His-314, and Glu-354 each contribute to the Fe cation site. Residues Ser-373 and Ile-403 each coordinate L-tryptophan.

This sequence belongs to the biopterin-dependent aromatic amino acid hydroxylase family. As to quaternary structure, homotetramer. Fe(2+) serves as cofactor.

The enzyme catalyses (6R)-L-erythro-5,6,7,8-tetrahydrobiopterin + L-tryptophan + O2 = 5-hydroxy-L-tryptophan + (4aS,6R)-4a-hydroxy-L-erythro-5,6,7,8-tetrahydrobiopterin. It participates in aromatic compound metabolism; serotonin biosynthesis; serotonin from L-tryptophan: step 1/2. Its function is as follows. Oxidizes L-tryptophan to 5-hydroxy-l-tryptophan in the rate-determining step of serotonin biosynthesis. This chain is Tryptophan 5-hydroxylase (tph1), found in Xenopus laevis (African clawed frog).